A 248-amino-acid polypeptide reads, in one-letter code: 5'-nucleotidase SurE (248 aa).

4 residues coordinate a divalent metal cation: Asp-8, Asp-9, Ser-39, and Asn-91.

Belongs to the SurE nucleotidase family. It depends on a divalent metal cation as a cofactor.

It localises to the cytoplasm. It carries out the reaction a ribonucleoside 5'-phosphate + H2O = a ribonucleoside + phosphate. In terms of biological role, nucleotidase that shows phosphatase activity on nucleoside 5'-monophosphates. In Geotalea uraniireducens (strain Rf4) (Geobacter uraniireducens), this protein is 5'-nucleotidase SurE.